Consider the following 597-residue polypeptide: 2-isopropylmalate synthase (597 aa).

Positions 1-80 are unknown; the sequence is MQLDIDRLVA…QKNESLERTE (80 aa). Residues 87–349 enclose the Pyruvate carboxyltransferase domain; the sequence is VIIFDTTLRD…ETGIDTTQIV (263 aa). The interval 87–349 is 2-isopropylmalate synthase; sequence VIIFDTTLRD…ETGIDTTQIV (263 aa). Residues Asp-96, His-284, His-286, and Asn-320 each coordinate Mn(2+). The tract at residues 475-597 is regulatory domain; it reads KFISQKISTE…KPKAQGSGTI (123 aa).

This sequence belongs to the alpha-IPM synthase/homocitrate synthase family. LeuA type 1 subfamily. As to quaternary structure, homodimer. Mn(2+) is required as a cofactor.

It is found in the cytoplasm. The enzyme catalyses 3-methyl-2-oxobutanoate + acetyl-CoA + H2O = (2S)-2-isopropylmalate + CoA + H(+). It functions in the pathway amino-acid biosynthesis; L-leucine biosynthesis; L-leucine from 3-methyl-2-oxobutanoate: step 1/4. In terms of biological role, catalyzes the condensation of the acetyl group of acetyl-CoA with 3-methyl-2-oxobutanoate (2-ketoisovalerate) to form 3-carboxy-3-hydroxy-4-methylpentanoate (2-isopropylmalate). The protein is 2-isopropylmalate synthase of Neisseria gonorrhoeae (strain ATCC 700825 / FA 1090).